The sequence spans 233 residues: 5'-methylthioadenosine/S-adenosylhomocysteine nucleosidase (233 aa).

The active-site Proton acceptor is the E12. Residues G78, I152, and 173–174 (ME) each bind substrate. D197 functions as the Proton donor in the catalytic mechanism.

This sequence belongs to the PNP/UDP phosphorylase family. MtnN subfamily. In terms of assembly, homodimer.

It catalyses the reaction S-adenosyl-L-homocysteine + H2O = S-(5-deoxy-D-ribos-5-yl)-L-homocysteine + adenine. The enzyme catalyses S-methyl-5'-thioadenosine + H2O = 5-(methylsulfanyl)-D-ribose + adenine. It carries out the reaction 5'-deoxyadenosine + H2O = 5-deoxy-D-ribose + adenine. The protein operates within amino-acid biosynthesis; L-methionine biosynthesis via salvage pathway; S-methyl-5-thio-alpha-D-ribose 1-phosphate from S-methyl-5'-thioadenosine (hydrolase route): step 1/2. Functionally, catalyzes the irreversible cleavage of the glycosidic bond in both 5'-methylthioadenosine (MTA) and S-adenosylhomocysteine (SAH/AdoHcy) to adenine and the corresponding thioribose, 5'-methylthioribose and S-ribosylhomocysteine, respectively. Also cleaves 5'-deoxyadenosine, a toxic by-product of radical S-adenosylmethionine (SAM) enzymes, into 5-deoxyribose and adenine. Thus, is required for in vivo function of the radical SAM enzymes biotin synthase and lipoic acid synthase, that are inhibited by 5'-deoxyadenosine accumulation. This is 5'-methylthioadenosine/S-adenosylhomocysteine nucleosidase from Yersinia enterocolitica serotype O:8 / biotype 1B (strain NCTC 13174 / 8081).